The chain runs to 168 residues: Sperm acrosome-associated protein 9 (168 aa).

As to quaternary structure, microtubule inner protein component of sperm flagellar doublet microtubules. Interacts with CABP1 and CALR. Interacts with INCA1. Interacts with microtubules. In terms of tissue distribution, expressed in sperm (at protein level). Expressed from almost all the cell types of testis, with abundant expression in round and elongated spermatids (at protein level). Predominantly expressed in tissues containing motile cilia.

The protein localises to the cytoplasm. It localises to the cytoplasmic vesicle. It is found in the secretory vesicle. The protein resides in the acrosome. Its subcellular location is the cytoskeleton. The protein localises to the cilium basal body. It localises to the flagellum axoneme. It is found in the cilium axoneme. The protein resides in the nucleus. Microtubule inner protein (MIP) part of the dynein-decorated doublet microtubules (DMTs) of multiciliated respiratory cells and the distal singlet microtubules of monoflagellated spermatozoa. Forms an extensive interaction network cross-linking the lumen of axonemal doublet microtubules. This is Sperm acrosome-associated protein 9 from Mus musculus (Mouse).